Here is a 289-residue protein sequence, read N- to C-terminus: Shikimate kinase (289 aa).

An ATP-binding site is contributed by 84-94; the sequence is PMASGLSSSSA.

This sequence belongs to the GHMP kinase family. Archaeal shikimate kinase subfamily.

The protein localises to the cytoplasm. The enzyme catalyses shikimate + ATP = 3-phosphoshikimate + ADP + H(+). It participates in metabolic intermediate biosynthesis; chorismate biosynthesis; chorismate from D-erythrose 4-phosphate and phosphoenolpyruvate: step 5/7. This Methanobrevibacter smithii (strain ATCC 35061 / DSM 861 / OCM 144 / PS) protein is Shikimate kinase.